The primary structure comprises 1227 residues: Multifunctional 2-oxoglutarate metabolism enzyme (1227 aa).

The interval 1–41 is 2-oxoglutarate dehydrogenase E1, N-terminal part; it reads MSSSPSPFGQNEWLVEEMYRKFRDDPSSVDPSWHEFLVDYS. The span at 23-37 shows a compositional bias: basic and acidic residues; the sequence is RDDPSSVDPSWHEFL. The tract at residues 23–102 is disordered; the sequence is RDDPSSVDPS…SATPAKGDES (80 aa). Positions 42 to 88 are linker; sequence PEPTTDSASNGRTTTAAPVTPPTPAPAPAPEPKAAPKPAAKTEAKPA. Residues 43–53 are compositionally biased toward polar residues; sequence EPTTDSASNGR. The segment covering 60–76 has biased composition (pro residues); that stretch reads VTPPTPAPAPAPEPKAA. Over residues 88–97 the composition is skewed to low complexity; it reads AKPAKSATPA. Positions 89–335 are succinyltransferase E2; it reads KPAKSATPAK…LRTIHQLLLD (247 aa). Residue H314 is the Proton acceptor; for succinyltransferase activity of the active site. The segment at 336-1227 is 2-oxoglutarate dehydrogenase E1, C-terminal part; that stretch reads DDFFDEIFRE…QQEILDTAFG (892 aa). Residue R540 coordinates thiamine diphosphate. 2-oxoglutarate is bound by residues H579 and S604. Residues S604, L606, D645, A646, A647, and N678 each contribute to the thiamine diphosphate site. A Mg(2+)-binding site is contributed by D645. 2 residues coordinate Mg(2+): N678 and I680. Residues 783–814 adopt a coiled-coil conformation; it reads DISMKEAEDALRDYQGQLERVFNEVRELEKHE. 2-oxoglutarate is bound at residue H1020. Acetyl-CoA-binding residues include T1038, R1054, K1089, S1092, Q1142, R1149, and R1150.

The protein belongs to the 2-oxoacid dehydrogenase family. Kgd subfamily. Homodimer. Interacts with the FHA domain of unphosphorylated GarA. The 2-oxoglutarate dehydrogenase (ODH) complex contains multiple copies of three enzymatic components: 2-oxoglutarate dehydrogenase (E1), dihydrolipoamide succinyltransferase (E2) and lipoamide dehydrogenase (E3). Requires Mg(2+) as cofactor. Thiamine diphosphate is required as a cofactor.

The enzyme catalyses glyoxylate + 2-oxoglutarate + H(+) = 2-hydroxy-3-oxoadipate + CO2. It carries out the reaction 2-oxoglutarate + H(+) = succinate semialdehyde + CO2. The catalysed reaction is N(6)-[(R)-lipoyl]-L-lysyl-[protein] + 2-oxoglutarate + H(+) = N(6)-[(R)-S(8)-succinyldihydrolipoyl]-L-lysyl-[protein] + CO2. It catalyses the reaction N(6)-[(R)-dihydrolipoyl]-L-lysyl-[protein] + succinyl-CoA = N(6)-[(R)-S(8)-succinyldihydrolipoyl]-L-lysyl-[protein] + CoA. The protein operates within carbohydrate metabolism; tricarboxylic acid cycle; succinate from 2-oxoglutarate (transferase route): step 1/2. It participates in carbohydrate metabolism; tricarboxylic acid cycle; succinyl-CoA from 2-oxoglutarate (dehydrogenase route): step 1/1. With respect to regulation, alpha-ketoglutarate dehydrogenase and decarboxylase activities are inhibited by unphosphorylated GarA, and allosterically activated by acetyl-CoA, the main substrate of the TCA cycle. Both the phosphoadenosine and acetyl moieties of acetyl-CoA are important for activation because neither CoA nor the synthetic compound S-(2-acetamidoethyl)-ethanethioate (which mimics the terminal acetyl-phosphopantetheine group of acetyl-CoA) has an activation effect. Shows three enzymatic activities that share a first common step, the attack of thiamine-PP on 2-oxoglutarate (alpha-ketoglutarate, KG), leading to the formation of an enamine-thiamine-PP intermediate upon decarboxylation. Thus, displays KGD activity, catalyzing the decarboxylation from five-carbon 2-oxoglutarate to four-carbon succinate semialdehyde (SSA). Also catalyzes C-C bond formation between the activated aldehyde formed after decarboxylation of alpha-ketoglutarate and the carbonyl of glyoxylate (GLX), to yield 2-hydroxy-3-oxoadipate (HOA), which spontaneously decarboxylates to form 5-hydroxylevulinate (HLA). And is also a component of the 2-oxoglutarate dehydrogenase (ODH) complex, that catalyzes the overall conversion of 2-oxoglutarate to succinyl-CoA and CO(2). The KG decarboxylase and KG dehydrogenase reactions provide two alternative, tightly regulated, pathways connecting the oxidative and reductive branches of the TCA cycle. This chain is Multifunctional 2-oxoglutarate metabolism enzyme (kgd), found in Mycolicibacterium smegmatis (strain ATCC 700084 / mc(2)155) (Mycobacterium smegmatis).